Here is a 245-residue protein sequence, read N- to C-terminus: MIIPALDLIDGTVVRLHQGDYGKQRDYGNDPLPRLQDYAAQGAEVLHLVDLTGAKDPAKRQIPLIKTLVAGVNVPVQVGGGVRSEEDVAALLEAGVARVVVGSTAVKSPEMVKGWFERFGADALVLALDVRIDEQGNKQVAVSGWQENSGVSLEQLVETYLPVGLKHVLCTDISRDGTLAGSNVSLYEEVCARYPQVAFQSSGGIGNINDVAAMRGTGVRGVIVGRALLEGKFTVKEAIACWQNA.

Catalysis depends on Asp7, which acts as the Proton acceptor. Asp129 serves as the catalytic Proton donor.

It belongs to the HisA/HisF family.

The protein localises to the cytoplasm. It catalyses the reaction 1-(5-phospho-beta-D-ribosyl)-5-[(5-phospho-beta-D-ribosylamino)methylideneamino]imidazole-4-carboxamide = 5-[(5-phospho-1-deoxy-D-ribulos-1-ylimino)methylamino]-1-(5-phospho-beta-D-ribosyl)imidazole-4-carboxamide. It participates in amino-acid biosynthesis; L-histidine biosynthesis; L-histidine from 5-phospho-alpha-D-ribose 1-diphosphate: step 4/9. This is 1-(5-phosphoribosyl)-5-[(5-phosphoribosylamino)methylideneamino] imidazole-4-carboxamide isomerase from Escherichia coli O17:K52:H18 (strain UMN026 / ExPEC).